Here is a 466-residue protein sequence, read N- to C-terminus: MAKRVAEKELTDRNWDEEDEVEEMGTFSVASEEVMKNRAVKKAKRRNVGFESDSGGAFKGFKGLVVPSGGGGFSGFGGSGGKPLEGLTNGNSTDNATPFSNVKTAAEPKAAFGSFAVNGPTTLVDKKISSPKCNNSNQPPSSGPASSTACPGNAYHKQLAGLNCSVRDWIVKHVNTNPLCDLTPIFKDYERYLATIEKQLENGGGSSSESQTDRATAGMEPPSLFGSTKLQQESPFSFHGNKAEDTSEKVEFTAEKKSDAAQGATSASFSFGKKIESSALGSLSSGSLTGFSFSAGSSSLFGKDAAQSKAASSLFSAKASESPAGGGSSECRDGEEEENDEPPKVVVTEVKEEDAFYSKKCKLFYKKDNEFKEKGVGTLHLKPTATQKTQLLVRADTNLGNILLNVLIAPNMPCTRTGKNNVLIVCVPNPPLDEKQPTLPATMLIRVKTSEDADELHKILLEKKDA.

Over residues 1–14 the composition is skewed to basic and acidic residues; sequence MAKRVAEKELTDRN. The segment at 1–22 is disordered; that stretch reads MAKRVAEKELTDRNWDEEDEVE. At Lys8 the chain carries N6-acetyllysine. Ser52 is modified (phosphoserine). Repeat unit 1 spans residues 76 to 77; the sequence is FG. The segment at 76 to 302 is 5 X 2 AA repeats of F-G; sequence FGGSGGKPLE…FSAGSSSLFG (227 aa). An N6-acetyllysine modification is found at Lys82. Repeat unit 2 spans residues 112–113; sequence FG. Position 126 is an N6-acetyllysine (Lys126). Disordered regions lie at residues 128-150 and 200-257; these read ISSP…STAC and LENG…AEKK. Polar residues predominate over residues 131 to 150; it reads PKCNNSNQPPSSGPASSTAC. The interval 143-205 is binding to CDKN1B; that stretch reads GPASSTACPG…IEKQLENGGG (63 aa). Ser208 carries the post-translational modification Phosphoserine. Repeat 3 spans residues 225–226; that stretch reads FG. The span at 225–235 shows a compositional bias: polar residues; it reads FGSTKLQQESP. Ser234 is modified (phosphoserine). Over residues 241 to 257 the composition is skewed to basic and acidic residues; it reads NKAEDTSEKVEFTAEKK. A Phosphothreonine modification is found at Thr246. At Ser268 the chain carries Phosphoserine. Copy 4 of the repeat occupies 271–272; it reads FG. Ser294 carries the post-translational modification Phosphoserine. Residues 301 to 302 form repeat 5; the sequence is FG. The tract at residues 316–343 is disordered; that stretch reads SAKASESPAGGGSSECRDGEEEENDEPP. Residues 333–466 enclose the RanBD1 domain; it reads DGEEEENDEP…HKILLEKKDA (134 aa). Lys351 participates in a covalent cross-link: Glycyl lysine isopeptide (Lys-Gly) (interchain with G-Cter in SUMO2). N6-acetyllysine is present on Lys448.

Does not interact with TPR. Interacts with Importin alpha-2, Importin beta, Importin beta-2, NUP153, Ran binding protein 7, CDKN1B and itself. Widely expressed at low levels. Highest in the developing neural tube and adult testes.

The protein resides in the nucleus. It localises to the nuclear pore complex. Its subcellular location is the nucleus membrane. Functionally, component of the nuclear pore complex that has a direct role in nuclear protein import. Actively displaces NLSs from importin-alpha, and facilitates disassembly of the importin-alpha:beta-cargo complex and importin recycling. Interacts with regulatory proteins of cell cycle progression including CDKN1B. This interaction is required for correct intracellular transport and degradation of CDKN1B. The sequence is that of Nuclear pore complex protein Nup50 (Nup50) from Mus musculus (Mouse).